Consider the following 902-residue polypeptide: Leucine-rich repeat-containing G-protein coupled receptor 5A (902 aa).

The first 22 residues, 1–22 (MDTSRTSLFLCSVLYSLQLVGS), serve as a signal peptide directing secretion. The Extracellular portion of the chain corresponds to 23–557 (ARPGKQHRSC…DHLFGSWLTR (535 aa)). 2 disulfide bridges follow: Cys-32/Cys-38 and Cys-36/Cys-49. In terms of domain architecture, LRRNT spans 32-61 (CPTPCECEQDGMLVRVDCSDRGLTGLPRNI). 17 LRR repeats span residues 41 to 61 (DGMLVRVDCSDRGLTGLPRNI), 62 to 85 (SIFTSYLDLSMNNITKLPSNALHN), 86 to 109 (LHFLEELRLAGNDLTYIPKGAFAG), 111 to 133 (GSLKVLMLQNNLLRQVPSEALQN), 134 to 157 (LRSLQSLRLDANHISYVPPSSFNG), 159 to 181 (FSLRHLWLDDNSLTEIPVRALES), 182 to 205 (LSALQAMTLALNKIHHIPDYAFGN), 207 to 229 (SSLVVLHLHNNRIYSLGKKCFDG), 230 to 253 (LHSLETLDLNYNNLDEFPAAIKTL), 254 to 276 (KNLKELGFHSNNIKSIPEQAFIG), 278 to 300 (PSLITTHFYDNPIQHVGRSAFQH), 301 to 324 (LPELRTLILNGASQITEFPDLTGT), 325 to 347 (TSLESLTLTGAQLVYLPSAVCNQ), 348 to 372 (LPNLKVIDLSYNHIKDLPSFSGCQR), 374 to 393 (QKIDLRHNEVYEIRFTTFQQ), 394 to 417 (LVGLRSLDLAWNKIAVIHPSSFSS), and 418 to 441 (LPSLIKLDLSSNHLTSFPVTGLHG). N-linked (GlcNAc...) asparagine glycosylation is found at Asn-60 and Asn-74. N-linked (GlcNAc...) asparagine glycosylation is present at Asn-205. Cysteines 345 and 370 form a disulfide. A disulfide bond links Cys-476 and Cys-537. An N-linked (GlcNAc...) asparagine glycan is attached at Asn-496. A helical membrane pass occupies residues 558–578 (IGVWLIVLLSFVCNALVIATV). Residues 579–589 (FRPLSYVPSIK) are Cytoplasmic-facing. A helical transmembrane segment spans residues 590–610 (LLIGLIAIINTLMGLSSGVLA). Residues 598–619 (INTLMGLSSGVLATVDALTFGN) form an LRR 18 repeat. Residues 611–634 (TVDALTFGNFAQYGAWWESGVGCQ) are Extracellular-facing. The cysteines at positions 633 and 708 are disulfide-linked. A helical membrane pass occupies residues 635-655 (ITGFLSVFAAETSVFLLTVAA). The Cytoplasmic portion of the chain corresponds to 656–678 (LERGFSIKCTTKFETKSSFLSVK). A helical membrane pass occupies residues 679–699 (LSIVFCFLLSIIIAVSPLMSG). Residues 700 to 718 (STYGTSPFCFPLLFGDPSS) are Extracellular-facing. A helical transmembrane segment spans residues 719 to 739 (MVFMVALVLLNSLCFLVMTVA). At 740 to 763 (YTKLYCSLEKGELENVWDCSMVKH) the chain is on the cytoplasmic side. Residues 764 to 784 (IALLLFTNCILYCPVAFLSFS) form a helical membrane-spanning segment. At 785-798 (SLLNLTFISPEVNK) the chain is on the extracellular side. Residues Asn-788 and Asn-797 are each glycosylated (N-linked (GlcNAc...) asparagine). Residues 799-819 (SILLLIIPLPACLNPLLYILF) form a helical membrane-spanning segment. The Cytoplasmic portion of the chain corresponds to 820–902 (NPHFKEDIGS…LSAVAFVPCH (83 aa)).

This sequence belongs to the G-protein coupled receptor 1 family. Expressed in the developing epithelial stem cells of the intestine.

The protein localises to the cell membrane. It localises to the golgi apparatus. Its subcellular location is the trans-Golgi network membrane. In terms of biological role, receptor for R-spondins that potentiates the canonical Wnt signaling pathway and acts as a stem cell marker of the intestinal epithelium and the hair follicle. Upon binding to R-spondins (RSPO1, RSPO2, RSPO3 or RSPO4), associates with phosphorylated LRP6 and frizzled receptors that are activated by extracellular Wnt receptors, triggering the canonical Wnt signaling pathway to increase expression of target genes. In contrast to classical G-protein coupled receptors, does not activate heterotrimeric G-proteins to transduce the signal. Involved in the development and/or maintenance of the adult intestinal stem cells during postembryonic development. The polypeptide is Leucine-rich repeat-containing G-protein coupled receptor 5A (lgr5-a) (Xenopus laevis (African clawed frog)).